We begin with the raw amino-acid sequence, 283 residues long: Serine protease 57 (283 aa).

The first 31 residues, 1 to 31 (MGLGLRGWGRPLLTVATALMLPVKPPAGSWG), serve as a signal peptide directing secretion. One can recognise a Peptidase S1 domain in the interval 34 to 263 (IIGGHEVTPH…FVAWIWDVVR (230 aa)). Residues cysteine 59 and cysteine 75 are joined by a disulfide bond. Active-site charge relay system residues include histidine 74 and aspartate 122. N-linked (GlcNAc...) asparagine glycosylation is found at asparagine 129 and asparagine 189. Intrachain disulfides connect cysteine 157–cysteine 224, cysteine 188–cysteine 202, and cysteine 214–cysteine 239. Serine 218 functions as the Charge relay system in the catalytic mechanism.

Belongs to the peptidase S1 family. After cleavage of the signal peptide, the N-terminus is probably further processed by CTSC. Processing by CTSC is probably required for accumulation in cytoplasmic granules; in the absence of CTSC the protein does not accumulate. Post-translationally, N-glycosylated. Detected in peripheral blood neutrophil granulocytes, but not in other types of leukocytes. Detected in neutrophils and neutrophil precursors in bone marrow (at protein level). Detected in myeloblasts and promyelocytes in bone marrow.

Its subcellular location is the cytoplasmic granule lumen. It localises to the secreted. Its activity is regulated as follows. Inhibited by SERPINA1, SERPINC1 and SERPING1. Its function is as follows. Serine protease that cleaves preferentially after Arg residues. Can also cleave after citrulline (deimidated arginine) and methylarginine residues. This chain is Serine protease 57 (PRSS57), found in Homo sapiens (Human).